The chain runs to 90 residues: Small ribosomal subunit protein bS18 (90 aa).

Basic and acidic residues predominate over residues 1–14; that stretch reads MARDNGNKDRDGKR. Positions 1 to 23 are disordered; it reads MARDNGNKDRDGKRPNGGRNRKM.

This sequence belongs to the bacterial ribosomal protein bS18 family. Part of the 30S ribosomal subunit. Forms a tight heterodimer with protein bS6.

Its function is as follows. Binds as a heterodimer with protein bS6 to the central domain of the 16S rRNA, where it helps stabilize the platform of the 30S subunit. This is Small ribosomal subunit protein bS18 from Clostridium acetobutylicum (strain ATCC 824 / DSM 792 / JCM 1419 / IAM 19013 / LMG 5710 / NBRC 13948 / NRRL B-527 / VKM B-1787 / 2291 / W).